We begin with the raw amino-acid sequence, 87 residues long: Translation initiation factor IF-1 (87 aa).

Positions 16–87 (LSKEDVIEME…TKGRISYRHK (72 aa)) constitute an S1-like domain.

The protein belongs to the IF-1 family. In terms of assembly, component of the 30S ribosomal translation pre-initiation complex which assembles on the 30S ribosome in the order IF-2 and IF-3, IF-1 and N-formylmethionyl-tRNA(fMet); mRNA recruitment can occur at any time during PIC assembly.

The protein localises to the cytoplasm. In terms of biological role, one of the essential components for the initiation of protein synthesis. Stabilizes the binding of IF-2 and IF-3 on the 30S subunit to which N-formylmethionyl-tRNA(fMet) subsequently binds. Helps modulate mRNA selection, yielding the 30S pre-initiation complex (PIC). Upon addition of the 50S ribosomal subunit IF-1, IF-2 and IF-3 are released leaving the mature 70S translation initiation complex. This chain is Translation initiation factor IF-1, found in Magnetococcus marinus (strain ATCC BAA-1437 / JCM 17883 / MC-1).